Here is a 454-residue protein sequence, read N- to C-terminus: tRNA modification GTPase MnmE (454 aa).

3 residues coordinate (6S)-5-formyl-5,6,7,8-tetrahydrofolate: arginine 23, glutamate 80, and lysine 120. Positions glycine 216 to glycine 377 constitute a TrmE-type G domain. K(+) is bound at residue asparagine 226. Residues asparagine 226 to serine 231, threonine 245 to threonine 251, aspartate 270 to glycine 273, asparagine 335 to aspartate 338, and serine 358 to arginine 360 each bind GTP. Serine 230 contacts Mg(2+). K(+) is bound by residues threonine 245, isoleucine 247, and threonine 250. Threonine 251 provides a ligand contact to Mg(2+). Lysine 454 contacts (6S)-5-formyl-5,6,7,8-tetrahydrofolate.

It belongs to the TRAFAC class TrmE-Era-EngA-EngB-Septin-like GTPase superfamily. TrmE GTPase family. As to quaternary structure, homodimer. Heterotetramer of two MnmE and two MnmG subunits. K(+) serves as cofactor.

It is found in the cytoplasm. In terms of biological role, exhibits a very high intrinsic GTPase hydrolysis rate. Involved in the addition of a carboxymethylaminomethyl (cmnm) group at the wobble position (U34) of certain tRNAs, forming tRNA-cmnm(5)s(2)U34. This is tRNA modification GTPase MnmE from Yersinia pseudotuberculosis serotype IB (strain PB1/+).